The following is a 389-amino-acid chain: Tryptophan synthase beta chain (389 aa).

The residue at position 84 (lysine 84) is an N6-(pyridoxal phosphate)lysine.

The protein belongs to the TrpB family. Tetramer of two alpha and two beta chains. Pyridoxal 5'-phosphate is required as a cofactor.

It catalyses the reaction (1S,2R)-1-C-(indol-3-yl)glycerol 3-phosphate + L-serine = D-glyceraldehyde 3-phosphate + L-tryptophan + H2O. The protein operates within amino-acid biosynthesis; L-tryptophan biosynthesis; L-tryptophan from chorismate: step 5/5. Its function is as follows. The beta subunit is responsible for the synthesis of L-tryptophan from indole and L-serine. In Clostridium novyi (strain NT), this protein is Tryptophan synthase beta chain.